We begin with the raw amino-acid sequence, 1158 residues long: Serine/threonine/tyrosine-interacting-like protein 2 (1158 aa).

Disordered stretches follow at residues methionine 1–asparagine 21, glutamate 280–serine 303, glutamate 315–lysine 337, leucine 360–isoleucine 392, glycine 407–serine 444, serine 492–alanine 527, lysine 559–serine 582, glutamine 597–lysine 622, lysine 873–leucine 915, and serine 940–glutamate 1135. Residues glutamate 8–glutamate 19 are compositionally biased toward acidic residues. One can recognise a Tyrosine-protein phosphatase domain in the interval asparagine 132 to glutamate 280. Residues serine 322–lysine 337 show a composition bias toward polar residues. Serine 377 carries the phosphoserine modification. Position 433 is a phosphothreonine (threonine 433). The span at serine 435 to serine 444 shows a compositional bias: low complexity. Over residues lysine 500 to glutamate 517 the composition is skewed to basic and acidic residues. Serine 509 carries the phosphoserine modification. The span at valine 600–leucine 619 shows a compositional bias: basic and acidic residues. The span at aspartate 877–aspartate 890 shows a compositional bias: acidic residues. 2 stretches are compositionally biased toward polar residues: residues arginine 897–serine 914 and serine 952–serine 966. The span at lysine 974 to serine 983 shows a compositional bias: low complexity. At serine 985 the chain carries Phosphoserine. The span at threonine 990–asparagine 999 shows a compositional bias: polar residues. The span at serine 1000 to threonine 1012 shows a compositional bias: low complexity. Serine 1036 is modified (phosphoserine). Basic and acidic residues-rich tracts occupy residues arginine 1044 to glutamate 1056, arginine 1064 to phenylalanine 1079, and arginine 1094 to arginine 1111. Residues arginine 1126–glutamate 1135 show a composition bias toward acidic residues.

The protein belongs to the protein-tyrosine phosphatase family. Non-receptor class dual specificity subfamily.

The protein resides in the cytoplasm. The protein localises to the myofibril. It localises to the sarcomere. In terms of biological role, may be required for myofiber maturation. The protein is Serine/threonine/tyrosine-interacting-like protein 2 of Homo sapiens (Human).